The sequence spans 218 residues: Transaldolase (218 aa).

Lys-83 functions as the Schiff-base intermediate with substrate in the catalytic mechanism.

It belongs to the transaldolase family. Type 3B subfamily.

It is found in the cytoplasm. It carries out the reaction D-sedoheptulose 7-phosphate + D-glyceraldehyde 3-phosphate = D-erythrose 4-phosphate + beta-D-fructose 6-phosphate. It participates in carbohydrate degradation; pentose phosphate pathway; D-glyceraldehyde 3-phosphate and beta-D-fructose 6-phosphate from D-ribose 5-phosphate and D-xylulose 5-phosphate (non-oxidative stage): step 2/3. Its function is as follows. Transaldolase is important for the balance of metabolites in the pentose-phosphate pathway. Does not show fructose-6-P aldolase activity. In Thermotoga maritima (strain ATCC 43589 / DSM 3109 / JCM 10099 / NBRC 100826 / MSB8), this protein is Transaldolase (tal).